A 301-amino-acid chain; its full sequence is Enolase-phosphatase E1 (301 aa).

Mg(2+) is bound by residues D22 and E24. Residues 163 to 164 (SS) and K197 each bind substrate. Residue D222 coordinates Mg(2+). A disordered region spans residues 273 to 301 (AQAGDTEAKRSASGDGALAAKKAPPTHDF).

The protein belongs to the HAD-like hydrolase superfamily. MasA/MtnC family. Monomer. Mg(2+) is required as a cofactor.

It is found in the cytoplasm. The protein localises to the nucleus. The enzyme catalyses 5-methylsulfanyl-2,3-dioxopentyl phosphate + H2O = 1,2-dihydroxy-5-(methylsulfanyl)pent-1-en-3-one + phosphate. It participates in amino-acid biosynthesis; L-methionine biosynthesis via salvage pathway; L-methionine from S-methyl-5-thio-alpha-D-ribose 1-phosphate: step 3/6. The protein operates within amino-acid biosynthesis; L-methionine biosynthesis via salvage pathway; L-methionine from S-methyl-5-thio-alpha-D-ribose 1-phosphate: step 4/6. Bifunctional enzyme that catalyzes the enolization of 2,3-diketo-5-methylthiopentyl-1-phosphate (DK-MTP-1-P) into the intermediate 2-hydroxy-3-keto-5-methylthiopentenyl-1-phosphate (HK-MTPenyl-1-P), which is then dephosphorylated to form the acireductone 1,2-dihydroxy-3-keto-5-methylthiopentene (DHK-MTPene). In Monosiga brevicollis (Choanoflagellate), this protein is Enolase-phosphatase E1.